We begin with the raw amino-acid sequence, 347 residues long: Metacaspase-2 (347 aa).

A propeptide spanning residues 1-55 is cleaved from the precursor; that stretch reads MCSLITQLCDAGQLADYVGLGWLNAVSSQPYLVQALGLQPPPRRVDVDAAFRDAK. A regulates substrate access to the active site region spans residues 1-70; it reads MCSLITQLCD…QPWVATPLPG (70 aa). Residue His-158 is part of the active site. The Ca(2+) site is built by Asp-173, Asp-189, and Asp-190. Residue Cys-213 is part of the active site. Ca(2+) is bound at residue Asp-220.

It belongs to the peptidase C14B family. Monomer. In terms of processing, auto-proteolytic cleavage of the propeptide after Lys-55 and between the large and small subunits after Lys-268 is required for catalytic activity towards large protein substrates but is dispensable towards small oligopeptide substrates. After processing, the propeptide and the large and small subunits remain associated by non-covalent bonds. In vivo, the unprocessed enzyme appears to be the predominant form.

It is found in the recycling endosome. Its activity is regulated as follows. Activated by Ca(2+). In response to calcium binding, the 280-loop, a disordered loop consisting of residues 269-275, undergoes a conformational change which stabilizes substrates in the active site. The binding to the substrate triggers the release of the N-terminal region resulting in the activation of the enzyme. Proteolytic cleavage is required for catalytic activity towards large protein substrates. Its function is as follows. Cysteine protease that cleaves specifically after arginine or lysine residues. In Trypanosoma brucei brucei (strain 927/4 GUTat10.1), this protein is Metacaspase-2.